We begin with the raw amino-acid sequence, 968 residues long: MPSILDKVLRMGEGRILKKLTGIVAQVNAHEDTVREFTDAELREETDVFKARLADGETLEAILPEAFATVREAARRTLGQRPHDVQVMGGAALHLGNIAEMKTGEGKTLAATLPAYLNALSGDGVHVVTVNDYLAQYQSDLMGRVYRFLGLTTGCILSGQKPEERRRHYAADITYGTNNELGFDYLRDNMAWSSGELVQRGHNFVIVDEVDSILIDEARTPLIISGPASGDANKWYAEFARVARRLTRESDYEVDEKKRNVGVLEPGIEKVEDYLGIDNLYESLNTPLIGFLNNAIKAKELFKRDKDYVVLKGEVLIVDEHTGRILAGRRYNEGMHQAIEAKEGVAIKAENQTLATITLQNYFRLYGKLAGMTGTAMTEAAEFQGTYKVGVVPIPTNMPMARLDKPDLVFKNEDGKFDAVVEDIVERHAAGQPVLVGTTSVEKSELLSTKLKRQGVPHEVLNAKQHAREASIVAMAGRKGAVTVATNMAGRGTDIMLGGNAEHLAIATLAEQGLDPNETPEEYEAAWPDALEEATTSVAAEHDEVVDLGGLYVLGTERHESRRIDNQLRGRSGRQGDPGESRFYLSMGDDLMRLFNSGLAERFMGSSAYPDDMPLESKLVTRGIASAQGQVEARNFEIRKNVLKYDDVLSRQRAVIYTDRRRVLEGEDLAEQVQGFLTDVVTAYIESATQAGAPESWDLDELWTALKAVYPISITPEEVVSEAGNATRVTPEMLTREILSDAEHAYARREEELTPDVMRQLERRVVLAVLDRKWREHLYEMDYLKEGIGLRAMAQRDPLVEYQREGFQLFSAMRDAIKEEAVGYLFNLEVKRPEPAESAEESTDGAPVVPAVPTGSDGEPLAPEQEAVPAGEPERPAKRRPAARVATRPAAEVDPLGLDTPERPAALQYSAPSSDGGSSFSEGRVVRSEGGTSGGSARPAAGASSGGGGGGANREARRRAAKAAKKRR.

Residues Gln-86, 104-108, and Asp-494 each bind ATP; that span reads GEGKT. The tract at residues 835–968 is disordered; the sequence is PAESAEESTD…RAAKAAKKRR (134 aa). Composition is skewed to low complexity over residues 883–892 and 910–923; these read ARVATRPAAE and SAPSSDGGSSFSEG. The span at 956-968 shows a compositional bias: basic residues; it reads ARRRAAKAAKKRR.

Belongs to the SecA family. As to quaternary structure, monomer and homodimer. Part of the essential Sec protein translocation apparatus which comprises SecA, SecYEG and auxiliary proteins SecDF. Other proteins may also be involved.

Its subcellular location is the cell membrane. The protein localises to the cytoplasm. The enzyme catalyses ATP + H2O + cellular proteinSide 1 = ADP + phosphate + cellular proteinSide 2.. Part of the Sec protein translocase complex. Interacts with the SecYEG preprotein conducting channel. Has a central role in coupling the hydrolysis of ATP to the transfer of proteins into and across the cell membrane, serving as an ATP-driven molecular motor driving the stepwise translocation of polypeptide chains across the membrane. This Beutenbergia cavernae (strain ATCC BAA-8 / DSM 12333 / CCUG 43141 / JCM 11478 / NBRC 16432 / NCIMB 13614 / HKI 0122) protein is Protein translocase subunit SecA.